We begin with the raw amino-acid sequence, 99 residues long: Putative septation protein SpoVG (99 aa).

Belongs to the SpoVG family.

Could be involved in septation. In Myxococcus xanthus (strain DK1622), this protein is Putative septation protein SpoVG.